We begin with the raw amino-acid sequence, 209 residues long: Pyridoxine/pyridoxamine 5'-phosphate oxidase (209 aa).

Substrate contacts are provided by residues arginine 7 to tyrosine 10 and lysine 64. Residues arginine 59 to lysine 64, phenylalanine 74 to threonine 75, arginine 80, and lysine 81 each bind FMN. Substrate contacts are provided by tyrosine 121, arginine 125, and serine 129. FMN is bound by residues glutamine 138 to serine 139 and tryptophan 182. Arginine 188–histidine 190 lines the substrate pocket. Position 192 (arginine 192) interacts with FMN.

It belongs to the pyridoxamine 5'-phosphate oxidase family. As to quaternary structure, homodimer. FMN serves as cofactor.

The catalysed reaction is pyridoxamine 5'-phosphate + O2 + H2O = pyridoxal 5'-phosphate + H2O2 + NH4(+). It carries out the reaction pyridoxine 5'-phosphate + O2 = pyridoxal 5'-phosphate + H2O2. It participates in cofactor metabolism; pyridoxal 5'-phosphate salvage; pyridoxal 5'-phosphate from pyridoxamine 5'-phosphate: step 1/1. The protein operates within cofactor metabolism; pyridoxal 5'-phosphate salvage; pyridoxal 5'-phosphate from pyridoxine 5'-phosphate: step 1/1. Functionally, catalyzes the oxidation of either pyridoxine 5'-phosphate (PNP) or pyridoxamine 5'-phosphate (PMP) into pyridoxal 5'-phosphate (PLP). The chain is Pyridoxine/pyridoxamine 5'-phosphate oxidase from Actinobacillus pleuropneumoniae serotype 3 (strain JL03).